Here is a 360-residue protein sequence, read N- to C-terminus: A-type ATP synthase subunit C (360 aa).

It belongs to the V-ATPase V0D/AC39 subunit family. Has multiple subunits, A(3), B(3), C, D, E, F, G, I and K(x); there may be a few other subunits as well.

The protein localises to the cell membrane. Functionally, component of the A-type ATP synthase that produces ATP from ADP in the presence of a proton gradient across the membrane. The polypeptide is A-type ATP synthase subunit C (Methanosarcina mazei (strain ATCC BAA-159 / DSM 3647 / Goe1 / Go1 / JCM 11833 / OCM 88) (Methanosarcina frisia)).